Consider the following 256-residue polypeptide: Pimeloyl-[acyl-carrier protein] methyl ester esterase (256 aa).

Residues 15 to 242 (HLVLLHGWGL…AAHAPFISHP (228 aa)) enclose the AB hydrolase-1 domain. Substrate contacts are provided by residues W22, 82-83 (SL), and 143-147 (FLALQ). Residue S82 is the Nucleophile of the active site. Active-site residues include D207 and H235. H235 is a binding site for substrate.

The protein belongs to the AB hydrolase superfamily. Carboxylesterase BioH family. In terms of assembly, monomer.

It localises to the cytoplasm. The catalysed reaction is 6-carboxyhexanoyl-[ACP] methyl ester + H2O = 6-carboxyhexanoyl-[ACP] + methanol + H(+). It functions in the pathway cofactor biosynthesis; biotin biosynthesis. Its function is as follows. The physiological role of BioH is to remove the methyl group introduced by BioC when the pimeloyl moiety is complete. It allows to synthesize pimeloyl-ACP via the fatty acid synthetic pathway through the hydrolysis of the ester bonds of pimeloyl-ACP esters. The protein is Pimeloyl-[acyl-carrier protein] methyl ester esterase of Escherichia coli O8 (strain IAI1).